Reading from the N-terminus, the 72-residue chain is UPF0346 protein GK1571 (72 aa).

This sequence belongs to the UPF0346 family.

The sequence is that of UPF0346 protein GK1571 from Geobacillus kaustophilus (strain HTA426).